A 229-amino-acid polypeptide reads, in one-letter code: MSSNNFDNNMPRIEFKKMPLTFIRLNTKKSNNAPFVSGSFWLADKVNANVYFSEYLMERIVPFENNKTNIVILENVSCYINFNWEEKRIIMRVVSFDNIFYKHQLSEQQTIDFVSAEKEYNYQTQTVNSYSNSDDEIEIINWLESDEQKAYFDSQLMFIDYKNQGFFKNKTMPDKLKNNANALELYKQIIKLDLEAFSGLYNGLKPFEAANKLIEKGYITLNDFFKYAI.

This is an uncharacterized protein from Ureaplasma parvum serovar 3 (strain ATCC 700970).